A 374-amino-acid chain; its full sequence is Actin-related protein 2/3 complex subunit 2B (374 aa).

The protein belongs to the ARPC2 family. Component of the Arp2/3 complex composed of ARP2, ARP3, ARPC1/p41-ARC, ARPC2/p34-ARC, ARPC3/p21-ARC, ARPC4/p20-ARC and ARPC5/p16-ARC. As to expression, expressed at low levels in all tissues with a relatively highest expression in inflorescences.

The protein resides in the cytoplasm. Its subcellular location is the cytoskeleton. The protein localises to the cell projection. In terms of biological role, functions as actin-binding component of the Arp2/3 complex which is involved in regulation of actin polymerization and together with an activating nucleation-promoting factor (NPF) mediates the formation of branched actin networks. Seems to contact the mother actin filament. Arp2/3 complex plays a critical role in the control of cell morphogenesis via the modulation of cell polarity development. The sequence is that of Actin-related protein 2/3 complex subunit 2B (ARPC2B) from Arabidopsis thaliana (Mouse-ear cress).